The sequence spans 376 residues: Succinyl-diaminopimelate desuccinylase (376 aa).

Residue His-74 participates in Zn(2+) binding. Asp-76 is a catalytic residue. Asp-105 contributes to the Zn(2+) binding site. Glu-135 acts as the Proton acceptor in catalysis. 3 residues coordinate Zn(2+): Glu-136, Glu-164, and His-349.

It belongs to the peptidase M20A family. DapE subfamily. In terms of assembly, homodimer. The cofactor is Zn(2+). Co(2+) serves as cofactor.

It carries out the reaction N-succinyl-(2S,6S)-2,6-diaminopimelate + H2O = (2S,6S)-2,6-diaminopimelate + succinate. Its pathway is amino-acid biosynthesis; L-lysine biosynthesis via DAP pathway; LL-2,6-diaminopimelate from (S)-tetrahydrodipicolinate (succinylase route): step 3/3. Functionally, catalyzes the hydrolysis of N-succinyl-L,L-diaminopimelic acid (SDAP), forming succinate and LL-2,6-diaminopimelate (DAP), an intermediate involved in the bacterial biosynthesis of lysine and meso-diaminopimelic acid, an essential component of bacterial cell walls. This chain is Succinyl-diaminopimelate desuccinylase, found in Zymomonas mobilis subsp. mobilis (strain ATCC 31821 / ZM4 / CP4).